Reading from the N-terminus, the 447-residue chain is Alliin lyase (447 aa).

Residues 1–2 constitute a propeptide that is removed on maturation; it reads QA. In terms of domain architecture, EGF-like; atypical spans 15-61; it reads EAVANINCSGHGRAFLDGILSDGSPKCECNTCYTGADCSQKITGCSA. An N-linked (GlcNAc...) asparagine glycan is attached at N21. Intrachain disulfides connect C22-C41, C43-C52, and C46-C59. Residue 94-102 participates in chloride binding; that stretch reads YFFNPVSNF. N148 and N193 each carry an N-linked (GlcNAc...) asparagine glycan. K253 is modified (N6-(pyridoxal phosphate)lysine). N330 carries N-linked (GlcNAc...) asparagine glycosylation. C370 and C378 are joined by a disulfide.

Belongs to the alliinase family. As to quaternary structure, homodimer. It depends on pyridoxal 5'-phosphate as a cofactor.

The protein resides in the vacuole. It carries out the reaction an S-alkyl-L-cysteine S-oxide = an S-alkyl sulfenate + 2-aminoprop-2-enoate. This Allium cepa var. aggregatum (Shallot) protein is Alliin lyase.